A 442-amino-acid chain; its full sequence is UDP-N-acetylmuramate--L-alanine ligase (442 aa).

Residue 109-115 participates in ATP binding; sequence GAHGKTS.

Belongs to the MurCDEF family.

The protein localises to the cytoplasm. The enzyme catalyses UDP-N-acetyl-alpha-D-muramate + L-alanine + ATP = UDP-N-acetyl-alpha-D-muramoyl-L-alanine + ADP + phosphate + H(+). Its pathway is cell wall biogenesis; peptidoglycan biosynthesis. In terms of biological role, cell wall formation. This chain is UDP-N-acetylmuramate--L-alanine ligase, found in Streptococcus pyogenes serotype M49 (strain NZ131).